The chain runs to 83 residues: Delta-conotoxin-like MVIC (83 aa).

An N-terminal signal peptide occupies residues 1-22 (MKLTCVMIVAVLFLTTWTFVTA). Positions 23–49 (DDSRYGLKNLFPKARHEMKNPEASKLN) are excised as a propeptide. Cystine bridges form between Cys-54-Cys-69, Cys-61-Cys-73, and Cys-68-Cys-78. 2 positions are modified to 4-hydroxyproline: Pro-56 and Pro-65.

The protein belongs to the conotoxin O1 superfamily. Expressed by the venom duct.

It localises to the secreted. Delta-conotoxins bind to site 6 of voltage-gated sodium channels (Nav) and inhibit the inactivation process. The protein is Delta-conotoxin-like MVIC of Conus magus (Magical cone).